We begin with the raw amino-acid sequence, 404 residues long: MREAPHVLGIVLAGGEGKRLYPLTADRAKPAVPFGGAYRLIDFVLSNLVNARYLRICVLTQYKSHSLDRHISQNWRLSGLAGEYITPVPAQQRLGPRWYTGSADAIYQSLNLIYDEDPDYIVVFGADHVYRMDPEQMVRLHIDSGAGATVAGIRVPRSEATAFGCIDSDESGRIRKFVEKPLDPPGTPDDPETTFVSMGNYIFTTKVLIDAIRADADDDHSDHDMGGDIIPRLVDDGMAAVYDFSDNEVPGATDRDRGYWRDVGTLDAFYDAHMDLVSVHPVFNLYNKRWPIRGESENLAPAKFVNGGSAQESVVGAGSIISAASVRNSVLSSNVVVDDGAIVEGSVIMPGARVGRGAVVRHAILDKNVVVGPGEMVGVDLERDRERFAISAGGVVAVGKGVWI.

Alpha-D-glucose 1-phosphate contacts are provided by residues Y99, G164, 179–180 (EK), and S197.

The protein belongs to the bacterial/plant glucose-1-phosphate adenylyltransferase family.

The enzyme catalyses alpha-D-glucose 1-phosphate + ATP + H(+) = ADP-alpha-D-glucose + diphosphate. Its pathway is capsule biogenesis; capsule polysaccharide biosynthesis. The protein operates within glycan biosynthesis; glycogen biosynthesis. In terms of biological role, involved in the biosynthesis of ADP-glucose, a building block, required in the biosynthesis of maltose-1-phosphate (M1P) and in the elongation reactions to produce linear alpha-1,4-glucans. Catalyzes the reaction between ATP and alpha-D-glucose 1-phosphate (G1P) to produce pyrophosphate and ADP-Glc. This chain is Glucose-1-phosphate adenylyltransferase, found in Mycolicibacterium paratuberculosis (strain ATCC BAA-968 / K-10) (Mycobacterium paratuberculosis).